The sequence spans 123 residues: Large ribosomal subunit protein bL12 (123 aa).

Lys84 carries the post-translational modification N6-methyllysine. The disordered stretch occupies residues 94 to 123; it reads PATLKEGMSKEDGDEAKTKLEEAGASVELK. The span at 100–115 shows a compositional bias: basic and acidic residues; it reads GMSKEDGDEAKTKLEE.

It belongs to the bacterial ribosomal protein bL12 family. Homodimer. Part of the ribosomal stalk of the 50S ribosomal subunit. Forms a multimeric L10(L12)X complex, where L10 forms an elongated spine to which 2 to 4 L12 dimers bind in a sequential fashion. Binds GTP-bound translation factors.

Its function is as follows. Seems to be the binding site for several of the factors involved in protein synthesis and appears to be essential for accurate translation. Forms part of the ribosomal stalk which helps the ribosome interact with GTP-bound translation factors. Is thus essential for accurate translation. This Halophilic eubacterium NRCC 41227 protein is Large ribosomal subunit protein bL12.